Reading from the N-terminus, the 160-residue chain is Type IV major fimbrial protein FimA (160 aa).

Residues 1 to 7 (MKSLQKG) constitute a propeptide, leader sequence. F8 is subject to N-methylphenylalanine. A helical transmembrane segment spans residues 8–28 (FTLIELMIVVAIIGILAAFAI). C63 and C105 are joined by a disulfide.

This sequence belongs to the N-Me-Phe pilin family. The pili are polar flexible filaments of about 5.4 nanometers diameter and 2.5 micrometers average length; they consist of only a single polypeptide chain arranged in a helical configuration of five subunits per turn in the assembled pilus.

Its subcellular location is the fimbrium. It is found in the membrane. Major component of the type IV fimbriae that plays an essential role in twitching motility, natural transformation, and protease secretion. In Dichelobacter nodosus (Bacteroides nodosus), this protein is Type IV major fimbrial protein FimA (fimA).